A 601-amino-acid chain; its full sequence is Elongation factor 4 (601 aa).

Residues 7 to 189 (ELIRNFSIIA…ALVTRLPPPK (183 aa)) form the tr-type G domain. GTP is bound by residues 19-24 (DHGKST) and 136-139 (NKID).

This sequence belongs to the TRAFAC class translation factor GTPase superfamily. Classic translation factor GTPase family. LepA subfamily.

It localises to the cell inner membrane. It catalyses the reaction GTP + H2O = GDP + phosphate + H(+). Its function is as follows. Required for accurate and efficient protein synthesis under certain stress conditions. May act as a fidelity factor of the translation reaction, by catalyzing a one-codon backward translocation of tRNAs on improperly translocated ribosomes. Back-translocation proceeds from a post-translocation (POST) complex to a pre-translocation (PRE) complex, thus giving elongation factor G a second chance to translocate the tRNAs correctly. Binds to ribosomes in a GTP-dependent manner. The protein is Elongation factor 4 of Acidiphilium cryptum (strain JF-5).